The primary structure comprises 1106 residues: Putative pre-mRNA-splicing factor ATP-dependent RNA helicase DHX16 (1106 aa).

3 disordered regions span residues lysine 73 to lysine 100, aspartate 120 to arginine 286, and tyrosine 366 to asparagine 394. The segment covering threonine 78–serine 94 has biased composition (low complexity). Residues lysine 138–lysine 155 show a composition bias toward basic residues. The segment covering aspartate 156–asparagine 167 has biased composition (basic and acidic residues). Low complexity predominate over residues asparagine 189 to asparagine 201. A compositionally biased stretch (basic and acidic residues) spans arginine 232–threonine 283. A Helicase ATP-binding domain is found at isoleucine 477–proline 640. Glycine 490–threonine 497 contacts ATP. The short motif at aspartate 587–histidine 590 is the DEAH box element. The Helicase C-terminal domain maps to threonine 665–glycine 838.

It belongs to the DEAD box helicase family. DEAH subfamily. DDX16/PRP8 sub-subfamily. Component of pre-catalytic spliceosome complexes.

It localises to the nucleus. The protein localises to the nucleoplasm. The enzyme catalyses ATP + H2O = ADP + phosphate + H(+). In terms of biological role, required for pre-mRNA splicing as component of the spliceosome. Contributes to pre-mRNA splicing after spliceosome formation and prior to the first transesterification reaction. This Dictyostelium discoideum (Social amoeba) protein is Putative pre-mRNA-splicing factor ATP-dependent RNA helicase DHX16 (dhx16).